A 296-amino-acid chain; its full sequence is Developmental pluripotency-associated protein 4 (296 aa).

Positions 1 to 13 are enriched in basic and acidic residues; the sequence is METAGDKKWSAEE. The interval 1–73 is disordered; that stretch reads METAGDKKWS…QTRRKVPIPP (73 aa). A compositionally biased stretch (low complexity) spans 23–34; that stretch reads SSQPSTAPAKAK. A compositionally biased stretch (basic and acidic residues) spans 42-58; the sequence is KSETDNGCKPKEGKPQD.

As to quaternary structure, interacts with DPPA2. Interacts with PCGF1. Expressed in pluripotent embryonic cells, but not in differentiated somatic tissues.

It localises to the nucleus. Functionally, may be involved in the maintenance of active epigenetic status of target genes. May inhibit differentiation of embryonic stem (ES) cells into a primitive ectoderm lineage. This is Developmental pluripotency-associated protein 4 (Dppa4) from Mus musculus (Mouse).